The following is a 773-amino-acid chain: Molybdenum cofactor sulfurase (773 aa).

Lys-243 carries the N6-(pyridoxal phosphate)lysine modification. Cys-410 is an active-site residue. Residues 632 to 773 form the MOSC domain; that stretch reads LRLLRQSGQR…LSCGDTVLVE (142 aa). Phosphoserine is present on Ser-731.

This sequence belongs to the class-V pyridoxal-phosphate-dependent aminotransferase family. MOCOS subfamily. Pyridoxal 5'-phosphate is required as a cofactor.

The catalysed reaction is Mo-molybdopterin + L-cysteine + AH2 = thio-Mo-molybdopterin + L-alanine + A + H2O. It participates in cofactor biosynthesis; molybdopterin biosynthesis. Functionally, sulfurates the molybdenum cofactor. Sulfation of molybdenum is essential for xanthine dehydrogenase (XDH) and aldehyde oxidase (ADO) enzymes in which molybdenum cofactor is liganded by 1 oxygen and 1 sulfur atom in active form. This Drosophila ananassae (Fruit fly) protein is Molybdenum cofactor sulfurase.